Reading from the N-terminus, the 365-residue chain is WAT1-related protein At4g01430 (365 aa).

10 consecutive transmembrane segments (helical) span residues 7-27, 39-59, 76-96, 100-120, 132-152, 183-203, 216-236, 250-270, 280-300, and 305-325; these read WAPV…NALV, IFGA…SYIW, FISG…GLSY, TVSM…ALIF, AGVL…LLTF, WLLG…WMLF, YSST…LSLY, FVIL…TVVT, VFVS…DFLI, and LYLG…VFLW. An EamA 1 domain is found at 20-151; sequence MGSVNALVKK…ICIMGAMLLT (132 aa). An EamA 2 domain is found at 216-324; it reads YSSTCLMSVF…VTITGLYVFL (109 aa). Residues 339–365 are disordered; sequence LNSSQFSQNKDNEDHTIANHKDTNLPV. The span at 348 to 365 shows a compositional bias: basic and acidic residues; the sequence is KDNEDHTIANHKDTNLPV.

This sequence belongs to the drug/metabolite transporter (DMT) superfamily. Plant drug/metabolite exporter (P-DME) (TC 2.A.7.4) family.

Its subcellular location is the membrane. The chain is WAT1-related protein At4g01430 from Arabidopsis thaliana (Mouse-ear cress).